An 823-amino-acid chain; its full sequence is Dolichyl-diphosphooligosaccharide--protein glycosyltransferase subunit STT3B (823 aa).

The interval 1–58 (MAEPSAPESKHKSSLNSSPWSGLMALGNSRHGHHGPGTQSASSAAAPKPGPPAGLSGG) is disordered. Ala2 carries the N-acetylalanine modification. Topologically, residues 2–41 (AEPSAPESKHKSSLNSSPWSGLMALGNSRHGHHGPGTQSA) are cytoplasmic. Phosphoserine occurs at positions 13, 18, and 29. Residues 42 to 83 (SSAAAPKPGPPAGLSGGLSQPAGWQSLLSFTILFLAWLAGFS) traverse the membrane as a helical segment. Over 84–170 (SRLFAVIRFE…VHIRDVCVFL (87 aa)) the chain is Lumenal. A DXD motif 1 motif is present at residues 98–100 (EFD). A Mn(2+)-binding site is contributed by Asp100. Residues 171–189 (APTFSGLTSISTFLLTREL) form a helical membrane-spanning segment. Topologically, residues 190-191 (WN) are cytoplasmic. A helical membrane pass occupies residues 192 to 209 (QGAGLLAACFIAIVPGYI). The Lumenal portion of the chain corresponds to 210–220 (SRSVAGSFDNE). Mn(2+)-binding residues include Asp218 and Glu220. Residues 218–220 (DNE) carry the DXD motif 2 motif. A helical membrane pass occupies residues 221–240 (GIAIFALQFTYYLWVKSVKT). Topologically, residues 241-242 (GS) are cytoplasmic. The chain crosses the membrane as a helical span at residues 243-257 (VFWTMCCCLSYFYMV). Residues 258-262 (SAWGG) lie on the Lumenal side of the membrane. Residues 263 to 279 (YVFIINLIPLHVFVLLL) traverse the membrane as a helical segment. The Cytoplasmic portion of the chain corresponds to 280 to 284 (MQRYS). Residues 285–310 (KRVYIAYSTFYIVGLILSMQIPFVGF) traverse the membrane as a helical segment. Residues 311–318 (QPIRTSEH) lie on the Lumenal side of the membrane. A helical membrane pass occupies residues 319 to 338 (MAAAGVFALLQAYAFLQYLR). The Cytoplasmic segment spans residues 339 to 347 (DRLTKQEFQ). The helical transmembrane segment at 348–368 (TLFFLGVSLAAGAVFLSVIYL) threads the bilayer. Over 369–407 (TYTGYIAPWSGRFYSLWDTGYAKIHIPIIASVSEHQPTT) the chain is Lumenal. The short motif at 399-402 (SVSE) is the SVSE motif element. Residues 408 to 430 (WVSFFFDLHILVCTFPAGLWFCI) form a helical membrane-spanning segment. Residues 431 to 436 (KNINDE) lie on the Cytoplasmic side of the membrane. A helical transmembrane segment spans residues 437–453 (RVFVALYAISAVYFAGV). The Lumenal segment spans residues 454–457 (MVRL). Arg456 contacts dolichyl diphosphooligosaccharide. Residues 458–479 (MLTLTPVVCMLSAIAFSNVFEH) form a helical membrane-spanning segment. At 480–523 (YLGDDMKRENPPVEDSSDEDDKRNPGNLYDKAGKVRKHVTEQEK) the chain is on the cytoplasmic side. A disordered region spans residues 487-526 (RENPPVEDSSDEDDKRNPGNLYDKAGKVRKHVTEQEKPEE). Ser495 and Ser496 each carry phosphoserine. A compositionally biased stretch (basic and acidic residues) spans 517-526 (HVTEQEKPEE). The chain crosses the membrane as a helical span at residues 524–549 (PEEGLGPNIKSIVTMLMLMLLMMFAV). At 550 to 823 (HCTWVTSNAY…KGKKTSKKTV (274 aa)) the chain is on the lumenal side. Residues 601 to 603 (WWD) form an interacts with target acceptor peptide in protein substrate region. The short motif at 601 to 605 (WWDYG) is the WWDYG motif element. Residue Tyr606 coordinates dolichyl diphosphooligosaccharide. Residues Asn613 and Asn620 are each glycosylated (N-linked (GlcNAc...) asparagine). A glycan (N-linked (GlcNAc...) (high mannose) asparagine) is linked at Asn624. Asn638 carries an N-linked (GlcNAc...) asparagine glycan. A DK motif motif is present at residues 668 to 675 (DINKFLWM).

The protein belongs to the STT3 family. As to quaternary structure, component of the oligosaccharyltransferase (OST) complex. There are 2 OST complexes, OST-A and OST-B, which contain STT3A or STT3B as catalytic subunit, respectively. OST-A and OST-B contain common core subunits RPN1, RPN2, OST48, OST4, DAD1 and TMEM258, and OST-B contains either MAGT1 or TUSC3 as specific accessory subunit. Requires Mg(2+) as cofactor. Mn(2+) serves as cofactor.

Its subcellular location is the endoplasmic reticulum membrane. It carries out the reaction a di-trans,poly-cis-dolichyl diphosphooligosaccharide + L-asparaginyl-[protein] = N(4)-(oligosaccharide-(1-&gt;4)-N-acetyl-beta-D-glucosaminyl-(1-&gt;4)-N-acetyl-beta-D-glucosaminyl)-L-asparaginyl-[protein] + a di-trans,poly-cis-dolichyl diphosphate + H(+). It participates in protein modification; protein glycosylation. In terms of biological role, catalytic subunit of the oligosaccharyl transferase (OST) complex that catalyzes the initial transfer of a defined glycan (Glc(3)Man(9)GlcNAc(2) in eukaryotes) from the lipid carrier dolichol-pyrophosphate to an asparagine residue within an Asn-X-Ser/Thr consensus motif in nascent polypeptide chains, the first step in protein N-glycosylation. N-glycosylation occurs cotranslationally and the complex associates with the Sec61 complex at the channel-forming translocon complex that mediates protein translocation across the endoplasmic reticulum (ER). All subunits are required for a maximal enzyme activity. This subunit contains the active site and the acceptor peptide and donor lipid-linked oligosaccharide (LLO) binding pockets. STT3B is present in a small subset of OST complexes and mediates both cotranslational and post-translational N-glycosylation of target proteins: STT3B-containing complexes are required for efficient post-translational glycosylation and while they are less competent than STT3A-containing complexes for cotranslational glycosylation, they have the ability to mediate glycosylation of some nascent sites that are not accessible for STT3A. STT3B-containing complexes also act post-translationally and mediate modification of skipped glycosylation sites in unfolded proteins. Plays a role in ER-associated degradation (ERAD) pathway that mediates ubiquitin-dependent degradation of misfolded endoplasmic reticulum proteins by mediating N-glycosylation of unfolded proteins, which are then recognized by the ERAD pathway and targeted for degradation. The chain is Dolichyl-diphosphooligosaccharide--protein glycosyltransferase subunit STT3B from Mus musculus (Mouse).